Consider the following 172-residue polypeptide: NADH-quinone oxidoreductase subunit B (172 aa).

[4Fe-4S] cluster-binding residues include C52, C53, C117, and C147.

It belongs to the complex I 20 kDa subunit family. In terms of assembly, NDH-1 is composed of 14 different subunits. Subunits NuoB, C, D, E, F, and G constitute the peripheral sector of the complex. The cofactor is [4Fe-4S] cluster.

The protein resides in the cell inner membrane. It carries out the reaction a quinone + NADH + 5 H(+)(in) = a quinol + NAD(+) + 4 H(+)(out). NDH-1 shuttles electrons from NADH, via FMN and iron-sulfur (Fe-S) centers, to quinones in the respiratory chain. Couples the redox reaction to proton translocation (for every two electrons transferred, four hydrogen ions are translocated across the cytoplasmic membrane), and thus conserves the redox energy in a proton gradient. This chain is NADH-quinone oxidoreductase subunit B, found in Ehrlichia ruminantium (strain Gardel).